The chain runs to 1058 residues: MSSSPLSKKRRVSGPDPKPGSNCSPAQSVLPQVPSAPTNGMAKNGSEADIDEGLYSRQLYVLGHEAMKRLQTSSVLVSGLRGLGVEIAKNIILGGVKAVTLHDQGTAQWADLSSQFYLREEDIGKNRAEVSQPRLAELNSYVPVTAYTGPLVEDFLSGFQVVVLTNSPLEDQLRVGEFCHSRGIKLVVADTRGLFGQLFCDFGEEMILTDSNGEQPLSTMVSMVTKDNPGVVTCLDEARHGFESGDFVSFSEVQGMTELNGNQPIEIKVLGPYTFSICDTSNFSDYIRGGIVSQVKVPKKISFKSLSASLAEPDFVMTDFAKFSRPAQLHIGFQALHKFCAQHSRPPRPRNEEDAAELVTLARAVNSKASSAVQQDSLDEDLIRNLAFVAAGDLAPINAFIGGLAAQEVMKACSGKFMPIMQWLYFDALECLPEDKESLTEDKCLPRQNRYDGQVAVFGSDLQEKLGRQKYFLVGAGAIGCELLKNFAMIGLGCGENGEIIVTDMDTIEKSNLNRQFLFRPWDVTKLKSDTAAAAVHQMNPHIRVTSHQNRVGPDTERIYDDDFFQTLDGVANALDNVDARMYMDRRCVYYRKPLLESGTLGTKGNVQVVIPFLTESYSSSQDPPEKSIPICTLKNFPNAIEHTLQWARDEFEGLFKQPAENVNQYLTDPKFVERTLRLAGTQPLEVLEAVQRSLVLQLPQSWADCVTWACHHWHTQYSNNIRQLLHNFPPDQLTSSGAPFWSGPKRCPHPLTFDVSNPLHLDYVMAAANLFAQTYGLAGSQDRAAVATLLQSVQVPEFTPKSGVKIHVSDQELQSANASVDDSRLEELKATLPSPDKLPGFKMYPIDFEKDDDSNFHMDFIVAASNLRAENYDIPPADRHKSKLIAGKIIPAIATTTAAVVGLVCLELYKVVQGHRHLDSYKNGFLNLALPFFGFSEPLAAPRHQYYNQEWTLWDRFEVQGLQPNGEEMTLKQFLDYFKTEHKLEITMLSQGVSMLYSFFMPAAKLKERLDQPMTEIVSRVSKRKLGRHVRALVLELCCNDESGEDVEVPYVRYTIR.

Positions 1-47 are disordered; it reads MSSSPLSKKRRVSGPDPKPGSNCSPAQSVLPQVPSAPTNGMAKNGSE. Ser-2 carries the post-translational modification N-acetylserine. Phosphoserine is present on residues Ser-4, Ser-13, Ser-21, Ser-24, and Ser-46. A compositionally biased stretch (polar residues) spans 21-38; it reads SNCSPAQSVLPQVPSAPT. Tyr-55 is subject to Phosphotyrosine. 2 consecutive repeat copies span residues 63-199 and 459-611. Residues 63–611 form a 2 approximate repeats region; sequence GHEAMKRLQT…GTKGNVQVVI (549 aa). ATP contacts are provided by residues Ala-478, Asp-504, Arg-515, Lys-528, and 576 to 577; that span reads DN. Lys-528 is modified (N6-succinyllysine). Residue Cys-632 is the Glycyl thioester intermediate of the active site. The residue at position 671 (Lys-671) is an N6-acetyllysine. Thr-800 is subject to Phosphothreonine. Phosphoserine is present on residues Ser-810, Ser-816, Ser-820, and Ser-835. Residue Lys-980 is modified to N6-acetyllysine.

It belongs to the ubiquitin-activating E1 family. In terms of assembly, monomer. As to expression, ubiquitous.

Its subcellular location is the cytoplasm. The protein localises to the mitochondrion. It is found in the nucleus. The enzyme catalyses ATP + ubiquitin + [E1 ubiquitin-activating enzyme]-L-cysteine = AMP + diphosphate + S-ubiquitinyl-[E1 ubiquitin-activating enzyme]-L-cysteine.. Its pathway is protein modification; protein ubiquitination. In terms of biological role, catalyzes the first step in ubiquitin conjugation to mark cellular proteins for degradation through the ubiquitin-proteasome system. Activates ubiquitin by first adenylating its C-terminal glycine residue with ATP, and thereafter linking this residue to the side chain of a cysteine residue in E1, yielding a ubiquitin-E1 thioester and free AMP. Essential for the formation of radiation-induced foci, timely DNA repair and for response to replication stress. Promotes the recruitment of TP53BP1 and BRCA1 at DNA damage sites. The protein is Ubiquitin-like modifier-activating enzyme 1 (UBA1) of Oryctolagus cuniculus (Rabbit).